A 405-amino-acid polypeptide reads, in one-letter code: Solute carrier family 35 member E2B (405 aa).

Positions 1 to 28 are disordered; sequence MSSSVKTPALEELVPGSEEKPKGRSPLS. 10 consecutive transmembrane segments (helical) span residues 81 to 101, 106 to 126, 142 to 162, 167 to 187, 195 to 215, 219 to 241, 264 to 284, 296 to 316, 326 to 346, and 347 to 367; these read LWFFFSFCTLFLNKYILSLLG, MLGAVQMLSTTVIGCVKTLVP, FLMTMLFVGLMRFATVVLGLV, VAVSFAETVKSSAPIFTVIMS, TGLLVNLSLIPVMGGLALCTA, SFNVLGFSAALSTNIMDCLQNVF, AAAVAMLVPARVFFTDVPVIG, VVLLLLTDGVLFHLQSVTAYA, FSVASTVKHALSIWLSVIVFG, and NKITSLSAVGTALVTVGVLLY. The tract at residues 380 to 405 is disordered; that stretch reads SLAAATGRAPDDTVEPLLPQDPRQHP.

The protein belongs to the TPT transporter family. SLC35E subfamily.

The protein resides in the membrane. Functionally, putative transporter. This chain is Solute carrier family 35 member E2B (SLC35E2B), found in Homo sapiens (Human).